Reading from the N-terminus, the 177-residue chain is MTSNSDGSSTSPVEKPITGDVETNEPTKPIRRLSTPSPEQDQEGDFDEEDDDDKFSVSTSTPTPTITKTKDSSDTSTVTRRKQPIRYIENKTRRHVTFSKRRHGIMKKAYELSVLTGANILLLILANSGLVYTFTTPKLEPVVREDEGKSLIRACINASDTPDATDTSPAQEQSPAN.

Over residues 1 to 12 (MTSNSDGSSTSP) the composition is skewed to polar residues. Disordered stretches follow at residues 1 to 82 (MTSN…TRRK) and 157 to 177 (NASDTPDATDTSPAQEQSPAN). The span at 40–53 (QDQEGDFDEEDDDD) shows a compositional bias: acidic residues. A compositionally biased stretch (low complexity) spans 56-67 (SVSTSTPTPTIT). The MADS-box domain occupies 80–134 (RRKQPIRYIENKTRRHVTFSKRRHGIMKKAYELSVLTGANILLLILANSGLVYTF). Polar residues predominate over residues 158–177 (ASDTPDATDTSPAQEQSPAN).

As to quaternary structure, interacts with ARG81 and ARG82.

Its subcellular location is the nucleus. In terms of biological role, with ARG81, ARG82 and MCM1, coordinates the expression of arginine anabolic and catabolic genes in response to arginine. This is Arginine metabolism regulation protein I (ARG80) from Saccharomyces cerevisiae (strain ATCC 204508 / S288c) (Baker's yeast).